A 263-amino-acid polypeptide reads, in one-letter code: Shikimate dehydrogenase (NADP(+)) (263 aa).

Shikimate contacts are provided by residues 16-18 and Thr65; that span reads SKS. The active-site Proton acceptor is Lys69. Residues Asn90 and Asp105 each contribute to the shikimate site. NADP(+)-binding positions include 125 to 129 and Leu208; that span reads GSGGS. Tyr210 contacts shikimate. NADP(+) is bound at residue Gly230.

The protein belongs to the shikimate dehydrogenase family. Homodimer.

The catalysed reaction is shikimate + NADP(+) = 3-dehydroshikimate + NADPH + H(+). It participates in metabolic intermediate biosynthesis; chorismate biosynthesis; chorismate from D-erythrose 4-phosphate and phosphoenolpyruvate: step 4/7. Its function is as follows. Involved in the biosynthesis of the chorismate, which leads to the biosynthesis of aromatic amino acids. Catalyzes the reversible NADPH linked reduction of 3-dehydroshikimate (DHSA) to yield shikimate (SA). The sequence is that of Shikimate dehydrogenase (NADP(+)) from Helicobacter pylori (strain P12).